The sequence spans 279 residues: Large ribosomal subunit protein uL2 (279 aa).

Positions 227–279 (GVAMNPVDHPMGGGEGKTSGGRHPVSPWGFPTKGKKTRDPNKLSSKFIKSKKR) are disordered.

Belongs to the universal ribosomal protein uL2 family. In terms of assembly, part of the 50S ribosomal subunit. Forms a bridge to the 30S subunit in the 70S ribosome.

In terms of biological role, one of the primary rRNA binding proteins. Required for association of the 30S and 50S subunits to form the 70S ribosome, for tRNA binding and peptide bond formation. It has been suggested to have peptidyltransferase activity; this is somewhat controversial. Makes several contacts with the 16S rRNA in the 70S ribosome. In Neorickettsia sennetsu (strain ATCC VR-367 / Miyayama) (Ehrlichia sennetsu), this protein is Large ribosomal subunit protein uL2.